Consider the following 143-residue polypeptide: Histone H2AX (143 aa).

The tract at residues 1-22 is disordered; sequence MSGRGKTGGKARAKAKSRSSRA. The residue at position 2 (Ser-2) is an N-acetylserine. Ser-2 is modified (phosphoserine). Residues Lys-6 and Lys-10 each carry the N6-acetyllysine modification. Residues 7–19 are compositionally biased toward basic residues; that stretch reads TGGKARAKAKSRS. Lys-10 carries the N6-lactoyllysine; alternate modification. Residues Lys-14 and Lys-16 each participate in a glycyl lysine isopeptide (Lys-Gly) (interchain with G-Cter in ubiquitin) cross-link. Lys-37 carries the post-translational modification N6-acetyllysine; by CREBBP and EP300. Lys-120 participates in a covalent cross-link: Glycyl lysine isopeptide (Lys-Gly) (interchain with G-Cter in ubiquitin). 2 positions are modified to phosphoserine: Ser-121 and Ser-122. The disordered stretch occupies residues 121–143; the sequence is SSATVGPKAPAVGKKASQASQEY. Glycyl lysine isopeptide (Lys-Gly) (interchain with G-Cter in SUMO2) cross-links involve residues Lys-128 and Lys-135. Ser-137 is subject to Phosphoserine. Ser-140 is modified (phosphoserine; by ATM, ATR and PRKDC). The [ST]-Q motif signature appears at 140 to 141; sequence SQ. Tyr-143 carries the phosphotyrosine; by WSTF modification.

It belongs to the histone H2A family. As to quaternary structure, the nucleosome is a histone octamer containing two molecules each of H2A, H2B, H3 and H4 assembled in one H3-H4 heterotetramer and two H2A-H2B heterodimers. The octamer wraps approximately 147 bp of DNA. Interacts with numerous proteins required for DNA damage signaling and repair when phosphorylated on Ser-140. These include MDC1, BRCA1 and the MRN complex, composed of MRE11, RAD50, and NBN. Interaction with the MRN complex is mediated at least in part by NBN. Also interacts with DHX9/NDHII when phosphorylated on Ser-140 and MCPH1 when phosphorylated at Ser-140 or Tyr-143. Interacts with ARRB2; the interaction is detected in the nucleus upon OR1D2 stimulation. Interacts with WRAP53/TCAB1. Interacts with TP53BP1. Interacts with HDGFL2. Phosphorylated on Ser-140 (to form gamma-H2AX or H2AX139ph) in response to DNA double strand breaks (DSBs) generated by exogenous genotoxic agents, by stalled replication forks, by meiotic recombination events and during immunoglobulin class switching in lymphocytes. Phosphorylation can extend up to several thousand nucleosomes from the actual site of the DSB and may mark the surrounding chromatin for recruitment of proteins required for DNA damage signaling and repair. Widespread phosphorylation may also serve to amplify the damage signal or aid repair of persistent lesions. Phosphorylation of Ser-140 (H2AX139ph) in response to ionizing radiation is mediated by both ATM and PRKDC while defects in DNA replication induce Ser-140 phosphorylation (H2AX139ph) subsequent to activation of ATR and PRKDC. Dephosphorylation of Ser-140 by PP2A is required for DNA DSB repair. In meiosis, Ser-140 phosphorylation (H2AX139ph) first occurs at synaptonemal complexes during leptotene and is an ATM-dependent response to the formation of programmed DSBs by SPO11. Ser-140 phosphorylation (H2AX139ph) subsequently occurs at unsynapsed regions of both autosomes and the XY bivalent during zygotene and is ATR- and BRCA1-dependent. Ser-140 phosphorylation (H2AX139ph) may also be required for transcriptional repression of unsynapsed chromatin and meiotic sex chromosome inactivation (MSCI), whereby the X and Y chromosomes condense in pachytene to form the heterochromatic XY-body. During immunoglobulin class switch recombination in lymphocytes, Ser-140 phosphorylation (H2AX139ph) at sites of DNA-recombination requires the activation-induced cytidine deaminase AICDA. Phosphorylation at Tyr-143 (H2AXY142ph) by BAZ1B/WSTF determines the relative recruitment of either DNA repair or pro-apoptotic factors. Phosphorylation at Tyr-143 (H2AXY142ph) favors the recruitment of APBB1/FE65 and pro-apoptosis factors such as MAPK8/JNK1, triggering apoptosis. In contrast, dephosphorylation of Tyr-143 by EYA proteins (EYA1, EYA2, EYA3 or EYA4) favors the recruitment of MDC1-containing DNA repair complexes to the tail of phosphorylated Ser-140 (H2AX139ph). Phosphorylated by VRK1. Post-translationally, monoubiquitination of Lys-120 (H2AXK119ub) by RING1 and RNF2/RING2 complex gives a specific tag for epigenetic transcriptional repression. Following DNA double-strand breaks (DSBs), it is ubiquitinated through 'Lys-63' linkage of ubiquitin moieties by the E2 ligase UBE2N and the E3 ligases RNF8 and RNF168, leading to the recruitment of repair proteins to sites of DNA damage. Ubiquitination at Lys-14 and Lys-16 (H2AK13Ub and H2AK15Ub, respectively) in response to DNA damage is initiated by RNF168 that mediates monoubiquitination at these 2 sites, and 'Lys-63'-linked ubiquitin are then conjugated to monoubiquitin; RNF8 is able to extend 'Lys-63'-linked ubiquitin chains in vitro. H2AK119Ub and ionizing radiation-induced 'Lys-63'-linked ubiquitination (H2AK13Ub and H2AK15Ub) are distinct events. In terms of processing, acetylation at Lys-6 (H2AXK5ac) by KAT5 component of the NuA4 histone acetyltransferase complex promotes NBN/NBS1 assembly at the sites of DNA damage. Acetylation at Lys-37 increases in S and G2 phases. This modification has been proposed to be important for DNA double-strand break repair. As to expression, most abundant in testis, thymus and spleen.

The protein localises to the nucleus. It localises to the chromosome. Functionally, variant histone H2A which replaces conventional H2A in a subset of nucleosomes. Nucleosomes wrap and compact DNA into chromatin, limiting DNA accessibility to the cellular machineries which require DNA as a template. Histones thereby play a central role in transcription regulation, DNA repair, DNA replication and chromosomal stability. DNA accessibility is regulated via a complex set of post-translational modifications of histones, also called histone code, and nucleosome remodeling. Required for checkpoint-mediated arrest of cell cycle progression in response to low doses of ionizing radiation and for efficient repair of DNA double strand breaks (DSBs) specifically when modified by C-terminal phosphorylation. This is Histone H2AX from Mus musculus (Mouse).